Consider the following 157-residue polypeptide: SsrA-binding protein (157 aa).

Belongs to the SmpB family.

The protein localises to the cytoplasm. Its function is as follows. Required for rescue of stalled ribosomes mediated by trans-translation. Binds to transfer-messenger RNA (tmRNA), required for stable association of tmRNA with ribosomes. tmRNA and SmpB together mimic tRNA shape, replacing the anticodon stem-loop with SmpB. tmRNA is encoded by the ssrA gene; the 2 termini fold to resemble tRNA(Ala) and it encodes a 'tag peptide', a short internal open reading frame. During trans-translation Ala-aminoacylated tmRNA acts like a tRNA, entering the A-site of stalled ribosomes, displacing the stalled mRNA. The ribosome then switches to translate the ORF on the tmRNA; the nascent peptide is terminated with the 'tag peptide' encoded by the tmRNA and targeted for degradation. The ribosome is freed to recommence translation, which seems to be the essential function of trans-translation. This chain is SsrA-binding protein, found in Syntrophomonas wolfei subsp. wolfei (strain DSM 2245B / Goettingen).